The chain runs to 34 residues: Chlorotoxin-like peptide AaCtx (34 aa).

4 disulfide bridges follow: C2–C19, C5–C27, C16–C32, and C20–C34.

The protein belongs to the short scorpion toxin superfamily. Chloride channel inhibitor family. As to expression, expressed by the venom gland.

The protein localises to the secreted. Functionally, toxin with unknown function in healthy organisms. On glioma cells, interacts with chloride channels (probably ClC-3/CLCN3) and MMP2 at the surface of glioma cells. This complex is then internalized via caveolae, thus inhibiting the chloride channels necessary for cell shrinkage and tumor propagation. Inhibits migration and invasion of U87 glioma cells expressing CLCN3/ClC-3 voltage-gated chloride channels. The sequence is that of Chlorotoxin-like peptide AaCtx from Androctonus australis (Sahara scorpion).